The following is a 156-amino-acid chain: Ribonuclease P protein component (156 aa).

The segment at 126–156 is disordered; that stretch reads GLRKLGVTPGGGRSPAPRAHSGARPRTDARS.

The protein belongs to the RnpA family. In terms of assembly, consists of a catalytic RNA component (M1 or rnpB) and a protein subunit.

The enzyme catalyses Endonucleolytic cleavage of RNA, removing 5'-extranucleotides from tRNA precursor.. Its function is as follows. RNaseP catalyzes the removal of the 5'-leader sequence from pre-tRNA to produce the mature 5'-terminus. It can also cleave other RNA substrates such as 4.5S RNA. The protein component plays an auxiliary but essential role in vivo by binding to the 5'-leader sequence and broadening the substrate specificity of the ribozyme. In Nocardia farcinica (strain IFM 10152), this protein is Ribonuclease P protein component.